We begin with the raw amino-acid sequence, 255 residues long: Accessory gland-specific peptide 26Aa (255 aa).

A signal peptide spans 1-18; it reads MNQILLCSQILLLLFAVA. A disordered region spans residues 86–110; that stretch reads PINNSKSRKNSSTLPSQILTDKPNQ. The segment covering 87–110 has biased composition (polar residues); sequence INNSKSRKNSSTLPSQILTDKPNQ. N88, N95, and N136 each carry an N-linked (GlcNAc...) asparagine glycan. 2 disordered regions span residues 177–197 and 235–255; these read NAQN…KDIA and NNPA…PSTT. The segment covering 183 to 192 has biased composition (basic residues); it reads KPTKSCKKRP. A compositionally biased stretch (polar residues) spans 245-255; it reads KSPSEGNPSTT.

In terms of processing, it undergoes several cleavages as it is secreted and it is further processed in the recipient female. As to expression, main cells of the accessory glands of males.

The protein localises to the secreted. It is found in the extracellular space. This protein is transferred from male to female's hemolymph during mating, affecting egglaying and behavior after mating. In Drosophila simulans (Fruit fly), this protein is Accessory gland-specific peptide 26Aa (Acp26Aa).